The following is a 93-amino-acid chain: Uteroglobin (93 aa).

The first 17 residues, 1-17, serve as a signal peptide directing secretion; sequence MKLAITIILVMLSVCYS.

Belongs to the secretoglobin family. In terms of assembly, antiparallel homodimer; disulfide-linked. Interaction with LMBR1L is controversial.

It localises to the secreted. Binds phosphatidylcholine, phosphatidylinositol, polychlorinated biphenyls (PCB) and weakly progesterone, potent inhibitor of phospholipase A2. The sequence is that of Uteroglobin (SCGB1A1) from Neotomodon alstoni (Mexican volcano mouse).